A 363-amino-acid polypeptide reads, in one-letter code: MSASSILDLVREDLRAFAGYSSARTSALQGDVWLNANESAWANPADPDASTRRYPDPQPKGLRSALAALYGCAPEQLLIGRGSDEAIDLLVRGLCVPERDAVLVTPPVFGMYAVCARLQNAPLVDVPLVDGPDGFHADIPAIVAMALSSNAKLVFLCSPSNPAGSAIALDQIEQALQALQGKALVVVDEAYGEFSDVPSAVGLLGRYDNLAVLRTLSKAHALAAARIGTLIANAELIALLRRCQAPYPVPTPCAAMAEQALSAPALEVTRRRIAEVRSERERMHKALVQLPGVRQVYPSQGNFLLVRFDDAEGAFQALLEAGVVVRDQRAVPRLADALRITLGTNEQNQRVLSALQRTQEAAA.

Lys-218 is subject to N6-(pyridoxal phosphate)lysine.

Belongs to the class-II pyridoxal-phosphate-dependent aminotransferase family. Histidinol-phosphate aminotransferase subfamily. As to quaternary structure, homodimer. Pyridoxal 5'-phosphate serves as cofactor.

The enzyme catalyses L-histidinol phosphate + 2-oxoglutarate = 3-(imidazol-4-yl)-2-oxopropyl phosphate + L-glutamate. It participates in amino-acid biosynthesis; L-histidine biosynthesis; L-histidine from 5-phospho-alpha-D-ribose 1-diphosphate: step 7/9. The polypeptide is Histidinol-phosphate aminotransferase (Xanthomonas axonopodis pv. citri (strain 306)).